A 1091-amino-acid chain; its full sequence is Error-prone DNA polymerase 1 (1091 aa).

Over residues 1051 to 1064 (RGDEFHHGMPDDHR) the composition is skewed to basic and acidic residues. The tract at residues 1051-1080 (RGDEFHHGMPDDHRAIRKRPPPSNHDDDEV) is disordered.

The protein belongs to the DNA polymerase type-C family. DnaE2 subfamily.

Its subcellular location is the cytoplasm. The enzyme catalyses DNA(n) + a 2'-deoxyribonucleoside 5'-triphosphate = DNA(n+1) + diphosphate. Functionally, DNA polymerase involved in damage-induced mutagenesis and translesion synthesis (TLS). It is not the major replicative DNA polymerase. The protein is Error-prone DNA polymerase 1 of Agrobacterium fabrum (strain C58 / ATCC 33970) (Agrobacterium tumefaciens (strain C58)).